A 387-amino-acid chain; its full sequence is Limonene 1,2-monooxygenase (387 aa).

It belongs to the bacterial luciferase oxidoreductase family. FAD is required as a cofactor.

It carries out the reaction (4S)-limonene + NADPH + O2 + H(+) = limonene 1,2-epoxide + NADP(+) + H2O. The enzyme catalyses (4S)-limonene + NADH + O2 + H(+) = limonene 1,2-epoxide + NAD(+) + H2O. The catalysed reaction is (4R)-limonene + NADH + O2 + H(+) = limonene 1,2-epoxide + NAD(+) + H2O. It catalyses the reaction (4R)-limonene + NADPH + O2 + H(+) = limonene 1,2-epoxide + NADP(+) + H2O. The protein operates within terpene metabolism; (4R)-limonene degradation; (1S,4R)-1-hydroxylimonen-2-one from (4R)-limonene: step 1/3. Functionally, acts on both enantiomers of limonene by their NAD-dependent epoxidation at the 1,2 double bond forming limonene-1,2-epoxide. This chain is Limonene 1,2-monooxygenase (limB), found in Rhodococcus erythropolis (Arthrobacter picolinophilus).